A 329-amino-acid polypeptide reads, in one-letter code: Sorting assembly machinery 35 kDa subunit (329 aa).

Component of the mitochondrial outer membrane sorting assembly machinery (SAM or TOB) complex, which at least consists of SAM35, SAM37 and SAM50.

The protein localises to the mitochondrion outer membrane. In terms of biological role, essential component of the mitochondrial outer membrane sorting assembly machinery (SAM or TOB) complex, which is required for the sorting of proteins with complicated topology, such as beta-barrel proteins, to the mitochondrial outer membrane after import by the TOM complex. The polypeptide is Sorting assembly machinery 35 kDa subunit (SAM35) (Saccharomyces cerevisiae (strain ATCC 204508 / S288c) (Baker's yeast)).